The sequence spans 367 residues: MSLSRVSVTAVRNLHPVTFSPSPRINILHGANGSGKTSVLEAIHLLGLARSFRSARLLPVIQYEQLACTVFGQVELAEGGHSSLGISRDRGGEFQIRIDGQNARSAAQLAEILPLQLINPDSFRLLEGAPKIRRQFLDWGVFHVEPRFMATWQRLQKALRQRNSWLRHGTLDAASQAAWDRELCLASDEIDEYRRAYIKALKPVFEQTLSELLDLEGLTLSYYRGWDKERELSAVLATSLQRDQQIGHTQAGPQRADLRLRLGAHNAADILSRGQQKLVVCALRIAQGHLVSQARRGQCIYLVDDLPSELDEQHRRALCRLLEELRCQVFITCVDHELLREGWQTETPVALFHVEQGRITQTHDHRE.

30 to 37 (GANGSGKT) lines the ATP pocket.

This sequence belongs to the RecF family.

It is found in the cytoplasm. The RecF protein is involved in DNA metabolism; it is required for DNA replication and normal SOS inducibility. RecF binds preferentially to single-stranded, linear DNA. It also seems to bind ATP. This Pseudomonas fluorescens (strain SBW25) protein is DNA replication and repair protein RecF.